The primary structure comprises 347 residues: MDNCILEIRNLSHYYDNNGNKTLDNINLKIKKNEFITLLGPSGCGKTTLIKILGGFLSQKNGEIYFFSKEISKTSPNKREINTVFQNYALFPHMNVFDNISFGLRMKKTPKDIIKEKVKTSLSLIGMPKYAYRNINELSGGQKQRVAIARAMVMEPKLLLLDEPLSALDLKMRQEMQKELKKIQRQLGITFIYVTHDQEEALTMSDRIVVMNEGIILQVGTPEEIYNEPKTKFVADFIGESNIFDGTYKKELVVSLLGYEFECLDKGFEAEEAVDLVIRPEDIKLLPKGKGHLSGIITSAIFQGVHYEMTLEIQKTNWIVQSTRLTKVGEEVDIFLEPDDIHVMHKE.

One can recognise an ABC transporter domain in the interval 6–238 (LEIRNLSHYY…PKTKFVADFI (233 aa)). Position 40 to 47 (40 to 47 (GPSGCGKT)) interacts with ATP.

It belongs to the ABC transporter superfamily. Spermidine/putrescine importer (TC 3.A.1.11.1) family. In terms of assembly, the complex is composed of two ATP-binding proteins (PotA), two transmembrane proteins (PotB and PotC) and a solute-binding protein (PotD).

Its subcellular location is the cell inner membrane. The enzyme catalyses ATP + H2O + polyamine-[polyamine-binding protein]Side 1 = ADP + phosphate + polyamineSide 2 + [polyamine-binding protein]Side 1.. In terms of biological role, part of the ABC transporter complex PotABCD involved in spermidine/putrescine import. Responsible for energy coupling to the transport system. The sequence is that of Spermidine/putrescine import ATP-binding protein PotA from Borrelia garinii subsp. bavariensis (strain ATCC BAA-2496 / DSM 23469 / PBi) (Borreliella bavariensis).